The chain runs to 265 residues: Glycine/sarcosine N-methyltransferase (265 aa).

S-adenosyl-L-methionine-binding positions include Tyr-28, Trp-36, Arg-45, Ala-69, Asp-90, 116-117 (DW), and Leu-134. 3 residues coordinate substrate: Asn-136, Arg-169, and Tyr-208.

It belongs to the class I-like SAM-binding methyltransferase superfamily. Glycine N-methyltransferase family. As to quaternary structure, monomer.

The enzyme catalyses glycine + 2 S-adenosyl-L-methionine = N,N-dimethylglycine + 2 S-adenosyl-L-homocysteine + 2 H(+). It carries out the reaction glycine + S-adenosyl-L-methionine = sarcosine + S-adenosyl-L-homocysteine + H(+). The catalysed reaction is sarcosine + S-adenosyl-L-methionine = N,N-dimethylglycine + S-adenosyl-L-homocysteine + H(+). Its pathway is amine and polyamine biosynthesis; betaine biosynthesis via glycine pathway; betaine from glycine: step 1/3. It functions in the pathway amine and polyamine biosynthesis; betaine biosynthesis via glycine pathway; betaine from glycine: step 2/3. With respect to regulation, inhibited by acetate, dimethylglycine and S-adenosyl-L-homocysteine. Functionally, catalyzes the methylation of glycine and sarcosine to sarcosine and dimethylglycine, respectively, with S-adenosylmethionine (AdoMet) acting as the methyl donor. The protein is Glycine/sarcosine N-methyltransferase of Aphanothece halophytica.